The primary structure comprises 314 residues: Methionyl-tRNA formyltransferase (314 aa).

110-113 (SLLP) is a (6S)-5,6,7,8-tetrahydrofolate binding site.

The protein belongs to the Fmt family.

It catalyses the reaction L-methionyl-tRNA(fMet) + (6R)-10-formyltetrahydrofolate = N-formyl-L-methionyl-tRNA(fMet) + (6S)-5,6,7,8-tetrahydrofolate + H(+). Functionally, attaches a formyl group to the free amino group of methionyl-tRNA(fMet). The formyl group appears to play a dual role in the initiator identity of N-formylmethionyl-tRNA by promoting its recognition by IF2 and preventing the misappropriation of this tRNA by the elongation apparatus. In Lactobacillus acidophilus (strain ATCC 700396 / NCK56 / N2 / NCFM), this protein is Methionyl-tRNA formyltransferase.